The chain runs to 209 residues: Ribonuclease HII (209 aa).

Residues 18–209 enclose the RNase H type-2 domain; sequence GLIAGVDEVG…FKPVKALLEG (192 aa). The a divalent metal cation site is built by Asp24, Glu25, and Asp116.

It belongs to the RNase HII family. It depends on Mn(2+) as a cofactor. Requires Mg(2+) as cofactor.

It is found in the cytoplasm. The catalysed reaction is Endonucleolytic cleavage to 5'-phosphomonoester.. In terms of biological role, endonuclease that specifically degrades the RNA of RNA-DNA hybrids. The polypeptide is Ribonuclease HII (Shewanella putrefaciens (strain CN-32 / ATCC BAA-453)).